The primary structure comprises 67 residues: Putative selenoprotein YdfZ (67 aa).

An S-selanylcysteine modification is found at cysteine 52.

In Escherichia coli O6:H1 (strain CFT073 / ATCC 700928 / UPEC), this protein is Putative selenoprotein YdfZ (ydfZ).